A 244-amino-acid polypeptide reads, in one-letter code: ATP synthase subunit 4, mitochondrial (244 aa).

The transit peptide at 1 to 36 directs the protein to the mitochondrion; that stretch reads MASRLAKSAICAARVRPVLSSRTIPAAATTLTSTRS.

Belongs to the eukaryotic ATPase B chain family. In terms of assembly, F-type ATPases have 2 components, CF(1) - the catalytic core - and CF(0) - the membrane proton channel. In yeast, the dimeric form of ATP synthase consists of 17 polypeptides: alpha, beta, gamma, delta, epsilon, 4 (B), 5 (OSCP), 6 (A), 8, 9 (C), d, E (Tim11), f, g, h, i/j and k.

The protein localises to the mitochondrion. The protein resides in the mitochondrion inner membrane. In terms of biological role, mitochondrial membrane ATP synthase (F(1)F(0) ATP synthase or Complex V) produces ATP from ADP in the presence of a proton gradient across the membrane which is generated by electron transport complexes of the respiratory chain. F-type ATPases consist of two structural domains, F(1) - containing the extramembraneous catalytic core, and F(0) - containing the membrane proton channel, linked together by a central stalk and a peripheral stalk. During catalysis, ATP synthesis in the catalytic domain of F(1) is coupled via a rotary mechanism of the central stalk subunits to proton translocation. Part of the complex F(0) domain and the peripheric stalk, which acts as a stator to hold the catalytic alpha(3)beta(3) subcomplex and subunit a/ATP6 static relative to the rotary elements. The polypeptide is ATP synthase subunit 4, mitochondrial (ATP4) (Paracoccidioides brasiliensis).